A 278-amino-acid chain; its full sequence is Proteolipid protein DM beta (278 aa).

4 helical membrane passes run 30–46 (LIAT…FCGC), 84–100 (VIYG…ILLM), 130–146 (FIML…GVTA), and 213–229 (LFIV…IAMV).

This sequence belongs to the myelin proteolipid protein family.

Its subcellular location is the membrane. This is Proteolipid protein DM beta from Squalus acanthias (Spiny dogfish).